The following is a 22-amino-acid chain: Cytin chain B (22 aa).

This sequence belongs to the protease inhibitor I13 (potato type I serine protease inhibitor) family. As to quaternary structure, heterodimer of an A chain and a B chain, linked by a disulfide bond.

Its function is as follows. Inhibitor of chymotrypsin. In Theromyzon tessulatum (Duck leech), this protein is Cytin chain B.